Reading from the N-terminus, the 512-residue chain is Cytochrome P450 72A15 (512 aa).

Residues 2 to 22 (EISVASVTISVVLAVVSWWIW) traverse the membrane as a helical segment. Position 460 (Cys460) interacts with heme.

It belongs to the cytochrome P450 family. It depends on heme as a cofactor.

The protein resides in the membrane. The chain is Cytochrome P450 72A15 (CYP72A15) from Arabidopsis thaliana (Mouse-ear cress).